Consider the following 114-residue polypeptide: Tyrosine-protein phosphatase 13 (114 aa).

The Tyrosine-protein phosphatase domain maps to 1–114; that stretch reads WRMLWEHNST…QFGQEGPITI (114 aa). E82 is a substrate binding site.

It belongs to the protein-tyrosine phosphatase family.

The catalysed reaction is O-phospho-L-tyrosyl-[protein] + H2O = L-tyrosyl-[protein] + phosphate. This is Tyrosine-protein phosphatase 13 (STY-13) from Styela plicata (Wrinkled sea squirt).